The sequence spans 101 residues: MKICDVCGLPEELCVCEEIAREVQTLKVYTVRRRFGKVMTIIEGIDEHDIDIKELTKILKARCACGGTAKKGQIELQGDHKKKVKEVLADMGFSSDTIEIR.

This sequence belongs to the SUI1 family.

This chain is Protein translation factor SUI1 homolog, found in Methanothermobacter thermautotrophicus (strain ATCC 29096 / DSM 1053 / JCM 10044 / NBRC 100330 / Delta H) (Methanobacterium thermoautotrophicum).